The chain runs to 142 residues: Glycine-rich RNA-binding protein 1 (142 aa).

Positions 1-65 (NSLHSAFSTY…RNITVNEAQS (65 aa)) constitute an RRM domain. The tract at residues 48-101 (MNGKELDGRNITVNEAQSRGGRGGGGGGGYGGGRGGGGGYGRRDGGGGGYGGGG) is disordered. Over residues 67–101 (GGRGGGGGGGYGGGRGGGGGYGRRDGGGGGYGGGG) the composition is skewed to gly residues.

In terms of biological role, possibly has a role in RNA transcription or processing during stress. The chain is Glycine-rich RNA-binding protein 1 (GRP1) from Sorghum bicolor (Sorghum).